The sequence spans 217 residues: 3-dehydroquinate dehydratase (217 aa).

3-dehydroquinate-binding positions include 26–28 and R59; that span reads EFR. Catalysis depends on H114, which acts as the Proton donor/acceptor. K140 functions as the Schiff-base intermediate with substrate in the catalytic mechanism. R178 and Q201 together coordinate 3-dehydroquinate.

It belongs to the type-I 3-dehydroquinase family. As to quaternary structure, homodimer.

The enzyme catalyses 3-dehydroquinate = 3-dehydroshikimate + H2O. It participates in metabolic intermediate biosynthesis; chorismate biosynthesis; chorismate from D-erythrose 4-phosphate and phosphoenolpyruvate: step 3/7. Its function is as follows. Involved in the third step of the chorismate pathway, which leads to the biosynthesis of aromatic amino acids. Catalyzes the cis-dehydration of 3-dehydroquinate (DHQ) and introduces the first double bond of the aromatic ring to yield 3-dehydroshikimate. This Hydrogenobaculum sp. (strain Y04AAS1) protein is 3-dehydroquinate dehydratase.